Reading from the N-terminus, the 379-residue chain is Alcohol dehydrogenase 2 (379 aa).

Residues cysteine 47, threonine 49, histidine 69, cysteine 99, cysteine 102, cysteine 105, cysteine 113, and cysteine 177 each coordinate Zn(2+). An alcohol is bound by residues threonine 49 and histidine 69. Residue threonine 49 participates in NAD(+) binding. NAD(+) contacts are provided by residues 202–207 (GLGAVG), aspartate 226, lysine 231, threonine 272, valine 295, 295–297 (VGV), phenylalanine 322, and arginine 372.

It belongs to the zinc-containing alcohol dehydrogenase family. Homodimer. Zn(2+) is required as a cofactor.

The protein resides in the cytoplasm. The enzyme catalyses a primary alcohol + NAD(+) = an aldehyde + NADH + H(+). It catalyses the reaction a secondary alcohol + NAD(+) = a ketone + NADH + H(+). This is Alcohol dehydrogenase 2 (ADH2) from Zea mays (Maize).